Reading from the N-terminus, the 267-residue chain is Cell division protein FtsQ (267 aa).

Residues 1–32 are Cytoplasmic-facing; it reads MRQKTISNKNKQTKNTNNISLRRKLGLMYKKA. The chain crosses the membrane as a helical span at residues 33–53; sequence ILVLKIVLMIFVCLFVFTKYF. At 54-267 the chain is on the periplasmic side; it reads TSIKTYLITN…DRNKYYIQKY (214 aa). Positions 73–141 constitute a POTRA domain; it reads FRLENVIIEG…NTVYIKLFER (69 aa).

It belongs to the FtsQ/DivIB family. FtsQ subfamily.

It is found in the cell inner membrane. Its function is as follows. Essential cell division protein. This Rickettsia prowazekii (strain Madrid E) protein is Cell division protein FtsQ.